The sequence spans 66 residues: Surface composition regulator (66 aa).

The protein belongs to the GlgS family.

Its function is as follows. Major determinant of cell surface composition. Negatively regulates motility, adhesion and synthesis of biofilm exopolysaccharides. The protein is Surface composition regulator of Escherichia coli O127:H6 (strain E2348/69 / EPEC).